Here is a 496-residue protein sequence, read N- to C-terminus: Transmembrane protein 104 (496 aa).

Residues 1-10 (MAGEITETGE) are Cytoplasmic-facing. The helical transmembrane segment at 11–31 (LYSPYVGLVYMFNLIVGTGAL) threads the bilayer. The Extracellular portion of the chain corresponds to 32-36 (TMPKA). Residues 37 to 57 (FATAGWLVSLVLLVFVGFMSF) form a helical membrane-spanning segment. Residues 58–146 (VTTTFAMEAM…SMFFNKVGVN (89 aa)) lie on the Cytoplasmic side of the membrane. The tract at residues 81–100 (THKEEDDEDSSTASDSDLLS) is disordered. The segment covering 91-100 (STASDSDLLS) has biased composition (low complexity). A helical transmembrane segment spans residues 147–167 (LFYFCIITYLYGDLAIYAAAV). Residues 168-204 (PVSLMQVTCSVSGNDSCGVDTDARYNDTDLCWGPLRR) are Extracellular-facing. Asparagine 193 is a glycosylation site (N-linked (GlcNAc...) asparagine). The helical transmembrane segment at 205–225 (VDVYRIYLAIFTVLLGPFTFF) threads the bilayer. Residues 226-233 (DVQKTKYL) lie on the Cytoplasmic side of the membrane. Residues 234–254 (QILTSMMRWIAFAIMIVLALV) traverse the membrane as a helical segment. Residues 255 to 265 (RIGKGQGEGHP) are Extracellular-facing. A helical transmembrane segment spans residues 266–286 (PLANFLGVQNLFGVCVYSFMC). The Cytoplasmic portion of the chain corresponds to 287–306 (QHSLPSLITPISSKRHITRL). Residues 307–327 (LFLDYALILAFYGLLSFTAIF) traverse the membrane as a helical segment. Topologically, residues 328-354 (CFRGDSLMDMYTLNFARCDVVGLAAVR) are extracellular. A helical membrane pass occupies residues 355-375 (FFLGLFPVFTISTNFPIIAVT). The Cytoplasmic segment spans residues 376–397 (LRNNWKTLFHREGGTYPWVVDR). A helical membrane pass occupies residues 398-418 (VVFPTITLVPPILVAFCTHDL). Over 419 to 421 (ESL) the chain is Extracellular. The chain crosses the membrane as a helical span at residues 422–442 (VAITGAYAGTGIQYVIPAFLV). Residues 443–470 (YLCRKDTQLTFGYGTVNKHRSPFRHTFW) are Cytoplasmic-facing. The chain crosses the membrane as a helical span at residues 471–491 (VAFVLLWAFSCFFFVTAYIVL). At 492–496 (KETQL) the chain is on the extracellular side.

Belongs to the TMEM104 family.

Its subcellular location is the membrane. The chain is Transmembrane protein 104 (Tmem104) from Mus musculus (Mouse).